The chain runs to 520 residues: GMP synthase [glutamine-hydrolyzing] (520 aa).

The 194-residue stretch at 9-202 (TVLIVDFGSQ…IHNIAGIKGD (194 aa)) folds into the Glutamine amidotransferase type-1 domain. Cys-86 acts as the Nucleophile in catalysis. Catalysis depends on residues His-176 and Glu-178. One can recognise a GMPS ATP-PPase domain in the interval 203-395 (WSMSAYRAKA…LGLPDSFIGR (193 aa)). 230–236 (SGGVDSS) is an ATP binding site.

As to quaternary structure, homodimer.

The enzyme catalyses XMP + L-glutamine + ATP + H2O = GMP + L-glutamate + AMP + diphosphate + 2 H(+). It functions in the pathway purine metabolism; GMP biosynthesis; GMP from XMP (L-Gln route): step 1/1. Functionally, catalyzes the synthesis of GMP from XMP. This is GMP synthase [glutamine-hydrolyzing] from Rhizobium rhizogenes (strain K84 / ATCC BAA-868) (Agrobacterium radiobacter).